The following is a 401-amino-acid chain: Multidrug resistance protein MdtA (401 aa).

The first 20 residues, 1 to 20 (MNQNNKHRTLLFRAALAAIA), serve as a signal peptide directing secretion.

It belongs to the membrane fusion protein (MFP) (TC 8.A.1) family. Part of a tripartite efflux system composed of MdtA, MdtB and MdtC.

It is found in the cell inner membrane. The chain is Multidrug resistance protein MdtA from Photorhabdus laumondii subsp. laumondii (strain DSM 15139 / CIP 105565 / TT01) (Photorhabdus luminescens subsp. laumondii).